The sequence spans 158 residues: Ribosome maturation factor RimP (158 aa).

Belongs to the RimP family.

The protein resides in the cytoplasm. Functionally, required for maturation of 30S ribosomal subunits. This Pseudomonas savastanoi pv. phaseolicola (strain 1448A / Race 6) (Pseudomonas syringae pv. phaseolicola (strain 1448A / Race 6)) protein is Ribosome maturation factor RimP.